The sequence spans 90 residues: Major envelope protein (90 aa).

Residues 53-70 (AVSVVSWAVAAGLIGELI) traverse the membrane as a helical segment.

It localises to the virion membrane. In terms of biological role, essential for membrane formation. The chain is Major envelope protein (P9) from Pseudomonas savastanoi pv. phaseolicola (Pseudomonas syringae pv. phaseolicola).